The sequence spans 120 residues: Membrane-anchored ubiquitin-fold protein 4 (120 aa).

The Ubiquitin-like domain maps to 7–73; that stretch reads VELKFRLYDG…LENGKTVAQC (67 aa). The S-palmitoyl cysteine moiety is linked to residue Cys-115. Cys-117 is modified (cysteine methyl ester). Cys-117 carries S-farnesyl cysteine lipidation. Residues 118-120 constitute a propeptide, removed in mature form; the sequence is TIM.

Ubiquitous.

The protein resides in the cell membrane. Its function is as follows. May serve as docking site to facilitate the association of other proteins to the plasma membrane. The sequence is that of Membrane-anchored ubiquitin-fold protein 4 (MUB4) from Arabidopsis thaliana (Mouse-ear cress).